The chain runs to 184 residues: uncharacterized protein (184 aa).

The 4Fe-4S domain occupies 72–135 (RKSQAILLIG…GIALGSAVKV (64 aa)). Positions 92, 95, 100, and 118 each coordinate [4Fe-4S] cluster.

Requires [4Fe-4S] cluster as cofactor.

This is an uncharacterized protein from Archaeoglobus fulgidus (strain ATCC 49558 / DSM 4304 / JCM 9628 / NBRC 100126 / VC-16).